The primary structure comprises 116 residues: Ribonuclease P protein component (116 aa).

It belongs to the RnpA family. As to quaternary structure, consists of a catalytic RNA component (M1 or rnpB) and a protein subunit.

It catalyses the reaction Endonucleolytic cleavage of RNA, removing 5'-extranucleotides from tRNA precursor.. In terms of biological role, RNaseP catalyzes the removal of the 5'-leader sequence from pre-tRNA to produce the mature 5'-terminus. It can also cleave other RNA substrates such as 4.5S RNA. The protein component plays an auxiliary but essential role in vivo by binding to the 5'-leader sequence and broadening the substrate specificity of the ribozyme. The protein is Ribonuclease P protein component of Exiguobacterium sibiricum (strain DSM 17290 / CCUG 55495 / CIP 109462 / JCM 13490 / 255-15).